The chain runs to 1181 residues: Putative type II restriction enzyme and methyltransferase RM.MjaORFECS2P (1181 aa).

The protein in the C-terminal section; belongs to the N(4)/N(6)-methyltransferase family.

The enzyme catalyses Endonucleolytic cleavage of DNA to give specific double-stranded fragments with terminal 5'-phosphates.. It catalyses the reaction a 2'-deoxyadenosine in DNA + S-adenosyl-L-methionine = an N(6)-methyl-2'-deoxyadenosine in DNA + S-adenosyl-L-homocysteine + H(+). Functionally, probably a G subtype restriction enzyme that recognizes an undetermined sequence and cleaves at an undetermined site. Probably also acts as an alpha subtype methylase, presumably on the same sequence. The polypeptide is Putative type II restriction enzyme and methyltransferase RM.MjaORFECS2P (Methanocaldococcus jannaschii (strain ATCC 43067 / DSM 2661 / JAL-1 / JCM 10045 / NBRC 100440) (Methanococcus jannaschii)).